The sequence spans 485 residues: Retron Mx162 reverse transcriptase (485 aa).

The tract at residues 1–33 is disordered; it reads MTARLDPFVPAASPQAVPTPELTAPSSDAAAKR. The region spanning 167–407 is the Reverse transcriptase domain; that stretch reads RWFAFHREVD…TRQRVTGLVV (241 aa). 3 residues coordinate Mg(2+): aspartate 250, aspartate 346, and aspartate 347.

It belongs to the bacterial reverse transcriptase family.

It catalyses the reaction DNA(n) + a 2'-deoxyribonucleoside 5'-triphosphate = DNA(n+1) + diphosphate. Its activity is regulated as follows. msDNA synthesis is inhibited by rifampicin and chloramphenicol. Its function is as follows. Reverse transcriptase (RT) responsible for synthesis of msDNA-Mx162 (a branched molecule with RNA linked by a 2',5'-phosphodiester bond to ssDNA). The retron transcript serves as primer (from a conserved internal G residue) and template for the reaction, and codes for the RT. The retron is involved in antiviral defense. This is Retron Mx162 reverse transcriptase from Myxococcus xanthus.